The primary structure comprises 60 residues: Myrmicitoxin(1)-Pr4b (60 aa).

The N-terminal stretch at 1–23 (MKAIIFLFAVLTVVAIIIPIISG) is a signal peptide. A propeptide spanning residues 24–33 (EPNAGPHAAS) is cleaved from the precursor. Glutamine amide is present on glutamine 59.

Belongs to the formicidae venom clade 2 family. In terms of tissue distribution, expressed by the venom gland.

The protein resides in the secreted. Toxin that causes a rapid and irreversible paralysis when intrathoracically injected into insects (blowflies). Does not cause spontaneous nocifensive behaviors by intraplantar injection in mice. This chain is Myrmicitoxin(1)-Pr4b, found in Pogonomyrmex rugosus (Desert harvester ant).